Consider the following 285-residue polypeptide: Type II restriction enzyme Cfr10I (285 aa).

Mg(2+) is bound by residues Asp134 and Glu204.

In terms of assembly, homodimer. The cofactor is Mg(2+).

It carries out the reaction Endonucleolytic cleavage of DNA to give specific double-stranded fragments with terminal 5'-phosphates.. In terms of biological role, an F and P subtype restriction enzyme that recognizes the double-stranded sequence 5'-RCCGGY-3' and cleaves after R-1. The polypeptide is Type II restriction enzyme Cfr10I (cfr10IR) (Citrobacter freundii).